The chain runs to 396 residues: MTTNTVSRKVAWLRVVTLAVAAFIFNTTEFVPVGLLSDIAQSFHMQTAQVGIMLTIYAWVVALMSLPFMLMTSQVERRKLLICLFVVFIASHVLSFLSWSFTVLVISRIGVAFAHAIFWSITASLAIRMAPAGKRAQALSLIATGTALAMVLGLPLGRIVGQYFGWRMTFFAIGIGALITLLCLIKLLPLLPSEHSGSLKSLPLLFRRPALMSIYLLTVVVVTAHYTAYSYIEPFVQNIAGFSANFATALLLLLGGAGIIGSVIFGKLGNQYASALVSTAIALLLVCLALLLPAANSEIHLGVLSIFWGIAMMLIGLGMQVKVLALAPDATDVAMALFSGIFNIGIGAGALVGNQVSLHWSMSMIGYVGAVPAFAALIWSIIIFRRWPVTLEEQTQ.

Helical transmembrane passes span 15-35, 50-70, 81-101, 103-123, 136-156, 170-190, 209-229, 246-266, 275-295, 299-319, 333-353, and 364-384; these read VVTLAVAAFIFNTTEFVPVGL, VGIMLTIYAWVVALMSLPFML, LICLFVVFIASHVLSFLSWSF, VLVISRIGVAFAHAIFWSITA, AQALSLIATGTALAMVLGLPL, FFAIGIGALITLLCLIKLLPL, PALMSIYLLTVVVVTAHYTAY, FATALLLLLGGAGIIGSVIFG, ALVSTAIALLLVCLALLLPAA, IHLGVLSIFWGIAMMLIGLGM, VAMALFSGIFNIGIGAGALVG, and MIGYVGAVPAFAALIWSIIIF.

This sequence belongs to the major facilitator superfamily. SotB (TC 2.A.1.2) family.

The protein localises to the cell inner membrane. In terms of biological role, involved in the efflux of sugars. The physiological role may be the reduction of the intracellular concentration of toxic sugars or sugar metabolites. The sequence is that of Probable sugar efflux transporter from Shigella boydii serotype 18 (strain CDC 3083-94 / BS512).